The chain runs to 280 residues: Probable S-methyl-5'-thioinosine phosphorylase (280 aa).

Phosphate is bound by residues Thr-8 and 50-51 (RH). Position 175 (Met-175) interacts with substrate. Thr-176 is a phosphate binding site. A substrate-binding site is contributed by 199-201 (NYA).

Belongs to the PNP/MTAP phosphorylase family. MTAP subfamily. Homotrimer.

It carries out the reaction S-methyl-5'-thioinosine + phosphate = 5-(methylsulfanyl)-alpha-D-ribose 1-phosphate + hypoxanthine. Its pathway is purine metabolism; purine nucleoside salvage. Catalyzes the reversible phosphorylation of S-methyl-5'-thioinosine (MTI) to hypoxanthine and 5-methylthioribose-1-phosphate. Involved in the breakdown of S-methyl-5'-thioadenosine (MTA), a major by-product of polyamine biosynthesis. Catabolism of (MTA) occurs via deamination to MTI and phosphorolysis to hypoxanthine. This chain is Probable S-methyl-5'-thioinosine phosphorylase, found in Methanothermobacter thermautotrophicus (strain ATCC 29096 / DSM 1053 / JCM 10044 / NBRC 100330 / Delta H) (Methanobacterium thermoautotrophicum).